Consider the following 189-residue polypeptide: Interferon alpha-13 (189 aa).

Residues 1–23 form the signal peptide; the sequence is MARPCAFLMVLVVLSYWSACSLG. 2 disulfides stabilise this stretch: cysteine 24–cysteine 122 and cysteine 52–cysteine 162. Residues asparagine 94 and asparagine 101 are each glycosylated (N-linked (GlcNAc...) asparagine).

It belongs to the alpha/beta interferon family.

Its subcellular location is the secreted. In terms of biological role, exhibits antiviral activity against Theiler's virus, Mengo virus and vesicular stomatitis virus. Interferons alpha stimulate the production of two enzymes: a protein kinase and an oligoadenylate synthetase. This chain is Interferon alpha-13 (Ifna13), found in Mus musculus (Mouse).